The sequence spans 680 residues: Viral IRF2-like protein (680 aa).

Positions 7–103 (SEWLTDFIID…RPFTIYKGKM (97 aa)) form a DNA-binding region, IRF tryptophan pentad repeat. Disordered stretches follow at residues 156–201 (SLRK…SENE), 220–257 (EEPE…HVHT), 343–365 (ETAS…ESVS), and 403–423 (ASPQ…ESVS). The segment covering 168-188 (KQAAAVATPTTSSAAEVSSRS) has biased composition (low complexity). Over residues 191-200 (EDTESSDSEN) the composition is skewed to acidic residues. Positions 220-240 (EEPEPSGFGSSGQSSSLLAPD) are enriched in low complexity.

It belongs to the IRF family. As to quaternary structure, interacts with host EIF2AK2/PKR. Interacts with host USP7.

It localises to the host nucleus. The protein resides in the host cytoplasm. Functionally, DNA-binding transcription factor that plays a role in the modulation of host immune response. Acts by interacting with host EIF2AK2/PKR and inhibiting its activation. In turn, EIF2AK2/PKR substrates including EIF2S1 or histone H2A are not phosphorylated. Inhibits type I interferon signaling by targeting host IRF3 during viral reactivation from latency. Attenuates the transcriptional activity of host FOXO3 via activation of the AKT1 signaling pathway, inhibiting FOXO3-mediated apoptosis. Also suppresses the expression of viral early lytic genes in both newly infected and reactivated infected host cells allowing regulation of viral life cycle by harnessing the interferon pathway. Mechanistically, promotes host PML bodies formation as well as host antiviral restriction factors IFIT1-3 expression leading to inhibition of viral early lytic proteins. Also regulates host TRAF3 and TRAF6 ubiquitination by interacting with USP7 deubiquitinase thereby influencing TRAF3/6-mediated signal transduction. The polypeptide is Viral IRF2-like protein (vIRF-2) (Human herpesvirus 8 type P (isolate GK18) (HHV-8)).